Reading from the N-terminus, the 104-residue chain is Large ribosomal subunit protein bL21 (104 aa).

This sequence belongs to the bacterial ribosomal protein bL21 family. In terms of assembly, part of the 50S ribosomal subunit. Contacts protein L20.

Its function is as follows. This protein binds to 23S rRNA in the presence of protein L20. The protein is Large ribosomal subunit protein bL21 of Granulibacter bethesdensis (strain ATCC BAA-1260 / CGDNIH1).